The sequence spans 395 residues: MAETFLFTSESVNEGHPDKLCDQISDAVLDACLAQDPDSKVACETCTKTNMVMVFGEITTKADVDYEKIVRDTCRNIGFTSADVGLDADNCKVLVNIEQQSPDIAQGVHGHFSKRPEEIGAGDQGHMFGYATDETPELMPLSHVLATKLGARLTEVRKNGTCAWLRPDGKTQVTVEYYNENGAMVPVRVHTVLISTQHDETVTNDEIAADLKEHVIKPVIPEKYLDEKTIFHLNPSGRFVIGGPHGESGLTGRKIIIDTYGGWGAHGGGAFSGKDPTKVDRSGAYIVRQAAKSIVASGLARRCIVQVSYAIGVPEPLSVFVDTYGTGKIPDKEILQIVKERFDFRPGMISINLDLKRGGNSRFLKTAAYGHFGRDDPDFTWEVVKPLKWDNKVQA.

Glutamate 10 contacts Mg(2+). Histidine 16 is a binding site for ATP. Glutamate 44 lines the K(+) pocket. Positions 57 and 100 each coordinate L-methionine. Residues 168-170 (DGK), 236-239 (SGRF), 253-254 (RK), alanine 270, lysine 274, and lysine 278 contribute to the ATP site. Lysine 278 provides a ligand contact to L-methionine.

Belongs to the AdoMet synthase family. In terms of assembly, homotetramer. Mn(2+) serves as cofactor. Mg(2+) is required as a cofactor. It depends on Co(2+) as a cofactor. Requires K(+) as cofactor.

The protein localises to the cytoplasm. It catalyses the reaction L-methionine + ATP + H2O = S-adenosyl-L-methionine + phosphate + diphosphate. It participates in amino-acid biosynthesis; S-adenosyl-L-methionine biosynthesis; S-adenosyl-L-methionine from L-methionine: step 1/1. Its function is as follows. Catalyzes the formation of S-adenosylmethionine from methionine and ATP. The reaction comprises two steps that are both catalyzed by the same enzyme: formation of S-adenosylmethionine (AdoMet) and triphosphate, and subsequent hydrolysis of the triphosphate. In Populus deltoides (Eastern poplar), this protein is S-adenosylmethionine synthase (METK).